Reading from the N-terminus, the 236-residue chain is 1-(5-phosphoribosyl)-5-[(5-phosphoribosylamino)methylideneamino] imidazole-4-carboxamide isomerase (236 aa).

The active-site Proton acceptor is D8. D129 acts as the Proton donor in catalysis.

This sequence belongs to the HisA/HisF family.

The protein localises to the cytoplasm. It carries out the reaction 1-(5-phospho-beta-D-ribosyl)-5-[(5-phospho-beta-D-ribosylamino)methylideneamino]imidazole-4-carboxamide = 5-[(5-phospho-1-deoxy-D-ribulos-1-ylimino)methylamino]-1-(5-phospho-beta-D-ribosyl)imidazole-4-carboxamide. The protein operates within amino-acid biosynthesis; L-histidine biosynthesis; L-histidine from 5-phospho-alpha-D-ribose 1-diphosphate: step 4/9. This is 1-(5-phosphoribosyl)-5-[(5-phosphoribosylamino)methylideneamino] imidazole-4-carboxamide isomerase from Methanoregula boonei (strain DSM 21154 / JCM 14090 / 6A8).